The sequence spans 763 residues: Formin-like protein 4 (763 aa).

Positions 1–33 (MAAMLMQPWPPFLPHLTLVFLTLILFFPNQSFS) are cleaved as a signal peptide. Residues 52 to 73 (PPVQSPVLSPPQNPSSSSSDSD) are disordered. Residues 80–100 (AVLITAASTLLVAAVFFFLVH) traverse the membrane as a helical segment. Disordered regions lie at residues 185-327 (IYSK…DSDH) and 726-763 (RSSM…DSDM). The span at 205–225 (RSSTSHSVIHNDNYRNATTTH) shows a compositional bias: polar residues. The span at 229-238 (VKTDSFEFVK) shows a compositional bias: basic and acidic residues. Over residues 240–280 (DPTPPPPPPPPIPVKQSATPPPPPPPKLKNNGPSPPPPPPL) the composition is skewed to pro residues. Residues 281-292 (KKTAALSSSASK) show a composition bias toward low complexity. An FH2 domain is found at 303–738 (SGESSNGQVK…MGSTQQRNAV (436 aa)). Positions 316–327 (LHWDKVNPDSDH) are enriched in basic and acidic residues. Over residues 726 to 736 (RSSMGSTQQRN) the composition is skewed to polar residues.

The protein belongs to the formin-like family. Class-I subfamily. In terms of assembly, interacts with profilin. Expressed in the whole plant (at protein level).

It is found in the cell membrane. Its function is as follows. Might be involved in the organization and polarity of the actin cytoskeleton. In Arabidopsis thaliana (Mouse-ear cress), this protein is Formin-like protein 4 (FH4).